Here is a 186-residue protein sequence, read N- to C-terminus: Translation initiation factor IF-3 (186 aa).

The protein belongs to the IF-3 family. As to quaternary structure, monomer.

The protein resides in the cytoplasm. In terms of biological role, IF-3 binds to the 30S ribosomal subunit and shifts the equilibrium between 70S ribosomes and their 50S and 30S subunits in favor of the free subunits, thus enhancing the availability of 30S subunits on which protein synthesis initiation begins. This chain is Translation initiation factor IF-3, found in Borreliella burgdorferi (strain ATCC 35210 / DSM 4680 / CIP 102532 / B31) (Borrelia burgdorferi).